Reading from the N-terminus, the 155-residue chain is Small ribosomal subunit protein uS7 (155 aa).

The protein belongs to the universal ribosomal protein uS7 family. As to quaternary structure, part of the 30S ribosomal subunit. Contacts proteins S9 and S11.

Its function is as follows. One of the primary rRNA binding proteins, it binds directly to 16S rRNA where it nucleates assembly of the head domain of the 30S subunit. Is located at the subunit interface close to the decoding center, probably blocks exit of the E-site tRNA. The protein is Small ribosomal subunit protein uS7 of Corynebacterium diphtheriae (strain ATCC 700971 / NCTC 13129 / Biotype gravis).